Consider the following 194-residue polypeptide: Large ribosomal subunit protein uL6z/uL6y (194 aa).

T75 is subject to Phosphothreonine.

Belongs to the universal ribosomal protein uL6 family.

The sequence is that of Large ribosomal subunit protein uL6z/uL6y (RPL9B) from Arabidopsis thaliana (Mouse-ear cress).